The primary structure comprises 185 residues: Ribosome-recycling factor (185 aa).

This sequence belongs to the RRF family.

Its subcellular location is the cytoplasm. Its function is as follows. Responsible for the release of ribosomes from messenger RNA at the termination of protein biosynthesis. May increase the efficiency of translation by recycling ribosomes from one round of translation to another. This Actinobacillus succinogenes (strain ATCC 55618 / DSM 22257 / CCUG 43843 / 130Z) protein is Ribosome-recycling factor.